Consider the following 980-residue polypeptide: Putative formate dehydrogenase YrhE (980 aa).

The 2Fe-2S ferredoxin-type domain occupies 5–81 (KSISVRVDGT…GMSIDLSGNR (77 aa)). Positions 39, 50, 53, and 65 each coordinate [2Fe-2S] cluster. The 41-residue stretch at 81 to 121 (RVKEAQTEAMDRLLENHLLYCTVCDNNNGNCTLHNTAEMMG) folds into the 4Fe-4S His(Cys)3-ligated-type domain. Residues H97, C101, C104, C111, C153, C156, C159, C163, C196, C199, C202, C206, C270, C273, C277, and C305 each contribute to the [4Fe-4S] cluster site. 2 4Fe-4S ferredoxin-type domains span residues 144 to 171 (PFYR…VNET) and 187 to 216 (EGVP…EKSM). The segment at 258-980 (MRETRTKKTK…NRPGYVHLTD (723 aa)) is formate dehydrogenase. Residues 263-319 (TKKTKTVCTFCGVGCSFEVWTKGRDILKIQPVSDAPVNAISTCVKGKFGWDFVNSKE) form the 4Fe-4S Mo/W bis-MGD-type domain. The disordered stretch occupies residues 944–980 (ETAPLPKTNPRNKKRHPQNGVEAERKWNRPGYVHLTD).

It in the C-terminal section; belongs to the prokaryotic molybdopterin-containing oxidoreductase family. The cofactor is [2Fe-2S] cluster. It depends on [4Fe-4S] cluster as a cofactor. Mo-bis(molybdopterin guanine dinucleotide) serves as cofactor.

The catalysed reaction is formate + NAD(+) = CO2 + NADH. This is Putative formate dehydrogenase YrhE (yrhE) from Bacillus subtilis (strain 168).